Consider the following 389-residue polypeptide: S-adenosylmethionine synthase (389 aa).

Residue histidine 17 participates in ATP binding. Aspartate 19 is a binding site for Mg(2+). A K(+)-binding site is contributed by glutamate 45. Residues glutamate 58 and glutamine 101 each contribute to the L-methionine site. The segment at 101 to 111 (QSPDISQGVDG) is flexible loop. Residues 170-172 (DSK), 237-238 (RF), aspartate 246, 252-253 (RK), alanine 269, and lysine 273 contribute to the ATP site. Aspartate 246 is an L-methionine binding site. Lysine 277 serves as a coordination point for L-methionine.

Belongs to the AdoMet synthase family. In terms of assembly, homotetramer; dimer of dimers. Mg(2+) is required as a cofactor. K(+) serves as cofactor.

It is found in the cytoplasm. The enzyme catalyses L-methionine + ATP + H2O = S-adenosyl-L-methionine + phosphate + diphosphate. The protein operates within amino-acid biosynthesis; S-adenosyl-L-methionine biosynthesis; S-adenosyl-L-methionine from L-methionine: step 1/1. Its function is as follows. Catalyzes the formation of S-adenosylmethionine (AdoMet) from methionine and ATP. The overall synthetic reaction is composed of two sequential steps, AdoMet formation and the subsequent tripolyphosphate hydrolysis which occurs prior to release of AdoMet from the enzyme. This Treponema denticola (strain ATCC 35405 / DSM 14222 / CIP 103919 / JCM 8153 / KCTC 15104) protein is S-adenosylmethionine synthase.